Reading from the N-terminus, the 743-residue chain is Ovocleidin-116 (743 aa).

Positions 1 to 18 (MRATLFCLCLCLLGTVLP) are cleaved as a signal peptide. Cys31 and Cys42 form a disulfide bridge. An N-linked (GlcNAc...) asparagine glycan is attached at Asn62. Residues 68 to 225 (KEEGDHQGTI…GTMGTGDSAI (158 aa)) form a disordered region. Residues 129–141 (DSNSVYPTSTSVE) show a composition bias toward polar residues. Gly residues predominate over residues 169 to 179 (GPHGDGDGGNG). Asn293 is a glycosylation site (N-linked (GlcNAc...) asparagine; partial). Disordered regions lie at residues 333 to 356 (GDSVTSRPVGHPSVGNSGDGATEI), 385 to 454 (SGKG…GPER), 505 to 534 (ARTQPEVASAPSTVGKAAPERHRNRAQQEV), 549 to 577 (RHRARVRPESARLGQAARPEVAPAPSTGG), 628 to 649 (DPWVWGSAHPQAQHTRGSTVAG), and 692 to 743 (SGVG…RQSL). The segment covering 402–420 (ATMTTRGGRGTASSGLTTG) has biased composition (low complexity). Residues 421 to 431 (DCSTAASTPSR) are compositionally biased toward polar residues. Over residues 549-558 (RHRARVRPES) the composition is skewed to basic and acidic residues.

The protein belongs to the osteoregulin family. Asn-62 is fully glycosylated, whereas only less than 10% of Asn-293 seem to be glycosylated. In terms of tissue distribution, in the eggshell, expressed mainly in the palisade and mammillary layers. Expression also detected in the hypertrophic zone of the epiphyseal growth plate, and in cortical and medullary bone (at protein level). Highly expressed in uterus. Not detected in the proximal oviduct, liver, magnum, duodenum and kidney.

The protein resides in the secreted. It is found in the extracellular space. The protein localises to the extracellular matrix. Functionally, major component of the eggshell matrix. May play an important role in the regulation of calcite growth during eggshell calcification. May also regulate the mineralization process in developing and growing bones. The protein is Ovocleidin-116 of Gallus gallus (Chicken).